The chain runs to 699 residues: Cysteine--tRNA ligase (699 aa).

The unknown stretch occupies residues 1-226; that stretch reads MTTITEKRLT…SEQQRLIHNP (226 aa). Position 254 (Cys254) interacts with Zn(2+). The short motif at 256 to 266 is the 'HIGH' region element; sequence MTVYDYCHLGH. Zn(2+) is bound by residues Cys435, His460, and Glu464. The short motif at 508–512 is the 'KMSKS' region element; that stretch reads KMSKS. Lys511 provides a ligand contact to ATP.

Belongs to the class-I aminoacyl-tRNA synthetase family. As to quaternary structure, monomer. The cofactor is Zn(2+).

Its subcellular location is the cytoplasm. It carries out the reaction tRNA(Cys) + L-cysteine + ATP = L-cysteinyl-tRNA(Cys) + AMP + diphosphate. The chain is Cysteine--tRNA ligase (cysS) from Neisseria meningitidis serogroup A / serotype 4A (strain DSM 15465 / Z2491).